Consider the following 141-residue polypeptide: ATP synthase epsilon chain (141 aa).

Belongs to the ATPase epsilon chain family. As to quaternary structure, F-type ATPases have 2 components, CF(1) - the catalytic core - and CF(0) - the membrane proton channel. CF(1) has five subunits: alpha(3), beta(3), gamma(1), delta(1), epsilon(1). CF(0) has three main subunits: a, b and c.

The protein localises to the cell inner membrane. Produces ATP from ADP in the presence of a proton gradient across the membrane. This is ATP synthase epsilon chain from Burkholderia ambifaria (strain ATCC BAA-244 / DSM 16087 / CCUG 44356 / LMG 19182 / AMMD) (Burkholderia cepacia (strain AMMD)).